Reading from the N-terminus, the 512-residue chain is N-acetyltryptophan 6-hydroxylase ivoC (512 aa).

Residues 6 to 26 (LVFSFPAWALLLVLTLLYTLY) traverse the membrane as a helical segment. N118 carries an N-linked (GlcNAc...) asparagine glycan. C453 serves as a coordination point for heme.

The protein belongs to the cytochrome P450 family. Requires heme as cofactor.

It localises to the membrane. It functions in the pathway pigment biosynthesis. Its function is as follows. N-acetyltryptophan 6-hydroxylase; part of the pathway that mediates the biosynthesis of the gray-brown conidiophore pigment. The first step of the pathway is performed by the nonribosomal peptide synthetase ivoA that catalyzes ATP-dependent unidirectional stereoinversion of L-tryptophan to D-tryptophan with complete conversion. While the stereoinversion is catalyzed by the epimerization (E) domain of ivoA, the terminal condensation (C) domain stereoselectively hydrolyzes D-tryptophanyl-S-phosphopantetheine thioester and thus represents a non-canonical C domain function. D-tryptophan is acetylated, probably by an endogenous acetyltransferase. N-acetyltryptophan is further 6-hydroxylated into N-acetyl-6-hydroxytryptophan (AHT) by the cytochrome P450 monooxygenase ivoC. N-acetyl-6-hydroxytryptophan is substrate of the N-acetyl-6-hydroxytryptophan oxidase ivoB to produce the gray-brown conidiophore pigment. The sequence is that of N-acetyltryptophan 6-hydroxylase ivoC from Emericella nidulans (strain FGSC A4 / ATCC 38163 / CBS 112.46 / NRRL 194 / M139) (Aspergillus nidulans).